The sequence spans 692 residues: ABC transporter F family member 5 (692 aa).

Residues E64 to S95 are disordered. Residues S86–S95 show a composition bias toward polar residues. 2 consecutive ABC transporter domains span residues V98–N356 and V425–L640. ATP contacts are provided by residues G130–T137 and G457–S464. The disordered stretch occupies residues A644–N692. Residues Q680 to N692 show a composition bias toward basic residues.

The protein belongs to the ABC transporter superfamily. ABCF family. EF3 (TC 3.A.1.121) subfamily.

In Arabidopsis thaliana (Mouse-ear cress), this protein is ABC transporter F family member 5 (ABCF5).